A 105-amino-acid chain; its full sequence is Thioredoxin (105 aa).

The region spanning 1–105 is the Thioredoxin domain; sequence MANNVMDSSF…SLLDWINKSI (105 aa). A disulfide bridge connects residues Cys-30 and Cys-33.

It belongs to the thioredoxin family.

Its function is as follows. Component of the thioredoxin-thioredoxin reductase system. Participates in various redox reactions through the reversible oxidation of its active center dithiol to a disulfide and catalyzes dithiol-disulfide exchange reactions. This is Thioredoxin (trxA) from Rickettsia conorii (strain ATCC VR-613 / Malish 7).